The chain runs to 607 residues: Elongation factor 4 (607 aa).

One can recognise a tr-type G domain in the interval 11–193; that stretch reads KNIRNFSIIA…KIVETIPAPS (183 aa). Residues 23–28 and 140–143 contribute to the GTP site; these read DHGKST and NKID.

It belongs to the TRAFAC class translation factor GTPase superfamily. Classic translation factor GTPase family. LepA subfamily.

The protein resides in the cell membrane. The enzyme catalyses GTP + H2O = GDP + phosphate + H(+). Its function is as follows. Required for accurate and efficient protein synthesis under certain stress conditions. May act as a fidelity factor of the translation reaction, by catalyzing a one-codon backward translocation of tRNAs on improperly translocated ribosomes. Back-translocation proceeds from a post-translocation (POST) complex to a pre-translocation (PRE) complex, thus giving elongation factor G a second chance to translocate the tRNAs correctly. Binds to ribosomes in a GTP-dependent manner. The protein is Elongation factor 4 of Staphylococcus carnosus (strain TM300).